The chain runs to 549 residues: Protein EPD2 (549 aa).

An N-terminal signal peptide occupies residues M1–A20. The N-linked (GlcNAc...) asparagine glycan is linked to N41. Residues C82 and C111 are joined by a disulfide bond. N-linked (GlcNAc...) asparagine glycans are attached at residues N173 and N261. Cystine bridges form between C224/C358, C242/C273, C381/C432, C390/C456, and C409/C414. An N-linked (GlcNAc...) asparagine glycan is attached at N467. Residues A470–I518 form a disordered region. The span at S484 to S514 shows a compositional bias: low complexity.

The protein belongs to the glycosyl hydrolase 72 family.

It is found in the cell membrane. This Candida maltosa (Yeast) protein is Protein EPD2 (EPD2).